The sequence spans 160 residues: Cyclic pyranopterin monophosphate synthase (160 aa).

Substrate contacts are provided by residues 74 to 76 and 112 to 113; these read LSH and ME. Asp-127 is a catalytic residue.

This sequence belongs to the MoaC family. As to quaternary structure, homohexamer; trimer of dimers.

The enzyme catalyses (8S)-3',8-cyclo-7,8-dihydroguanosine 5'-triphosphate = cyclic pyranopterin phosphate + diphosphate. It participates in cofactor biosynthesis; molybdopterin biosynthesis. Functionally, catalyzes the conversion of (8S)-3',8-cyclo-7,8-dihydroguanosine 5'-triphosphate to cyclic pyranopterin monophosphate (cPMP). The polypeptide is Cyclic pyranopterin monophosphate synthase (Geotalea uraniireducens (strain Rf4) (Geobacter uraniireducens)).